Consider the following 563-residue polypeptide: Dihydroxy-acid dehydratase (563 aa).

Aspartate 79 is a binding site for Mg(2+). Cysteine 120 contacts [2Fe-2S] cluster. The Mg(2+) site is built by aspartate 121 and lysine 122. Residue lysine 122 is modified to N6-carboxylysine. Residue cysteine 193 participates in [2Fe-2S] cluster binding. Glutamate 451 serves as a coordination point for Mg(2+). The active-site Proton acceptor is serine 477.

Belongs to the IlvD/Edd family. Homodimer. [2Fe-2S] cluster serves as cofactor. Requires Mg(2+) as cofactor.

It catalyses the reaction (2R)-2,3-dihydroxy-3-methylbutanoate = 3-methyl-2-oxobutanoate + H2O. The catalysed reaction is (2R,3R)-2,3-dihydroxy-3-methylpentanoate = (S)-3-methyl-2-oxopentanoate + H2O. Its pathway is amino-acid biosynthesis; L-isoleucine biosynthesis; L-isoleucine from 2-oxobutanoate: step 3/4. The protein operates within amino-acid biosynthesis; L-valine biosynthesis; L-valine from pyruvate: step 3/4. In terms of biological role, functions in the biosynthesis of branched-chain amino acids. Catalyzes the dehydration of (2R,3R)-2,3-dihydroxy-3-methylpentanoate (2,3-dihydroxy-3-methylvalerate) into 2-oxo-3-methylpentanoate (2-oxo-3-methylvalerate) and of (2R)-2,3-dihydroxy-3-methylbutanoate (2,3-dihydroxyisovalerate) into 2-oxo-3-methylbutanoate (2-oxoisovalerate), the penultimate precursor to L-isoleucine and L-valine, respectively. This chain is Dihydroxy-acid dehydratase, found in Sulfurovum sp. (strain NBC37-1).